We begin with the raw amino-acid sequence, 140 residues long: Midkine (140 aa).

A signal peptide spans 1-20 (MQHRSFFLLALVALLAVTTA). 5 disulfide bridges follow: Cys34–Cys58, Cys42–Cys67, Cys49–Cys71, Cys81–Cys113, and Cys91–Cys123.

It belongs to the pleiotrophin family. Homodimer. Interacts with ALK. Interacts with LRP1; promotes neuronal survival. Interacts with LRP2. Interacts with NCAM1. Interacts (via C-terminal) with PTPRZ1 (via chondroitin sulfate chains); this interaction is inhibited by PTN; this interaction promotes neuronal migration. Interacts with NCL; this interaction promotes NCL clustering and lateral movements of this complex into lipid rafts leading to MDK internalization. Interacts with LRP6 and LRP8: this interaction is calcium dependent. Interacts with ITGA4. Interacts with ITGA6. Interacts with ITGB1. Interacts with ITGA4:ITGB1 complex; this interaction mediates MDK-induced osteoblast cells migration through PXN phosphorylation. Interacts with ITGA6:ITGB1 complex; this interaction mediates MDK-induced neurite outgrowth. Interacts with NOTCH2; this interactio mediates a nuclear accumulation of NOTCH2 and therefore activation of NOTCH2 signaling leading to interaction between HES1 and STAT3. Interacts with GPC2 (via heparan sulfate chain); this interaction is inhibited by heparin followed by chondroitin sulfate E; this interaction induces GPC2 clustering through heparan sulfate chain; this interaction induces neuronal cell adhesion and neurite outgrowth. Interacts with SDC3; this interaction induces SDC3 clustering; this interaction induces neuronal cell adhesion and neurite outgrowth. Interacts with SDC1. Interacts with CSPG5; this interaction promotes elongation of oligodendroglial precursor-like cells. As to expression, expressed at a low level in arteries, and at higher levels in newly formed neointima. In brain, expressed in the caudate nucleus and the brain stem.

The protein resides in the secreted. In terms of biological role, developmentally regulated, secreted growth factor homologous to pleiotrophin (PTN), which has heparin binding activity. Binds anaplastic lymphoma kinase (ALK) which induces ALK activation and subsequent phosphorylation of the insulin receptor substrate (IRS1), followed by the activation of mitogen-activated protein kinase (MAPK) and PI3-kinase, and the induction of cell proliferation. Involved in neointima formation after arterial injury, possibly by mediating leukocyte recruitment. Also involved in early fetal adrenal gland development. Its function is as follows. Secreted protein that functions as a cytokine and growth factor and mediates its signal through cell-surface proteoglycan and non-proteoglycan receptors. Binds cell-surface proteoglycan receptors via their chondroitin sulfate (CS) groups. Thereby regulates many processes like inflammatory response, cell proliferation, cell adhesion, cell growth, cell survival, tissue regeneration, cell differentiation and cell migration. Participates in inflammatory processes by exerting two different activities. Firstly, mediates neutrophils and macrophages recruitment to the sites of inflammation both by direct action by cooperating namely with ITGB2 via LRP1 and by inducing chemokine expression. This inflammation can be accompanied by epithelial cell survival and smooth muscle cell migration after renal and vessel damage, respectively. Secondly, suppresses the development of tolerogenic dendric cells thereby inhibiting the differentiation of regulatory T cells and also promote T cell expansion through NFAT signaling and Th1 cell differentiation. Promotes tissue regeneration after injury or trauma. After heart damage negatively regulates the recruitment of inflammatory cells and mediates cell survival through activation of anti-apoptotic signaling pathways via MAPKs and AKT pathways through the activation of angiogenesis. Also facilitates liver regeneration as well as bone repair by recruiting macrophage at trauma site and by promoting cartilage development by facilitating chondrocyte differentiation. Plays a role in brain by promoting neural precursor cells survival and growth through interaction with heparan sulfate proteoglycans. Binds PTPRZ1 and promotes neuronal migration and embryonic neurons survival. Binds SDC3 or GPC2 and mediates neurite outgrowth and cell adhesion. Binds chondroitin sulfate E and heparin leading to inhibition of neuronal cell adhesion induced by binding with GPC2. Binds CSPG5 and promotes elongation of oligodendroglial precursor-like cells. Also binds ITGA6:ITGB1 complex; this interaction mediates MDK-induced neurite outgrowth. Binds LRP1; promotes neuronal survival. Binds ITGA4:ITGB1 complex; this interaction mediates MDK-induced osteoblast cells migration through PXN phosphorylation. Binds anaplastic lymphoma kinase (ALK) which induces ALK activation and subsequent phosphorylation of the insulin receptor substrate (IRS1), followed by the activation of mitogen-activated protein kinase (MAPK) and PI3-kinase, and the induction of cell proliferation. Promotes epithelial to mesenchymal transition through interaction with NOTCH2. During arteriogenesis, plays a role in vascular endothelial cell proliferation by inducing VEGFA expression and release which in turn induces nitric oxide synthase expression. Moreover activates vasodilation through nitric oxide synthase activation. Negatively regulates bone formation in response to mechanical load by inhibiting Wnt/beta-catenin signaling in osteoblasts. In addition plays a role in hippocampal development, working memory, auditory response, early fetal adrenal gland development and the female reproductive system. This Rattus norvegicus (Rat) protein is Midkine.